We begin with the raw amino-acid sequence, 257 residues long: MAVIPIEERKFPKTLVLFDVDGTLTPARLSVSPEMLETLQNLRKVVAIGFVGGSDLSKQQEQLSVNGENVIDSFDYAFAENGLTAYRYGQQLASQSFIAWLGEEKYQKLVNFCLHYIADLDIPVKRGTFIEFRNGMINISPVGRNANTEERNEFERFDKGRKIRATMVDVLREKFKDYGLTFSIGGQISFDVFPAGWDKTYCLQHVEKEGFDTIHFFGDKTYKGGNDYEIFVDPRTIGHSVTNPDDTIAELKKIFNI.

The active-site Nucleophile is Asp-19. Residues Asp-19 and Asp-21 each contribute to the Mg(2+) site. Asp-21 serves as the catalytic Proton donor/acceptor. Positions 28, 133, 144, 151, 189, and 191 each coordinate alpha-D-mannose 1-phosphate. Asp-219, Phe-231, Asp-233, and Thr-236 together coordinate Mg(2+).

The protein belongs to the eukaryotic PMM family. As to quaternary structure, homodimer.

It is found in the cytoplasm. It carries out the reaction alpha-D-mannose 1-phosphate = D-mannose 6-phosphate. It participates in nucleotide-sugar biosynthesis; GDP-alpha-D-mannose biosynthesis; alpha-D-mannose 1-phosphate from D-fructose 6-phosphate: step 2/2. Involved in the synthesis of the GDP-mannose and dolichol-phosphate-mannose required for a number of critical mannosyl transfer reactions. The chain is Phosphomannomutase (pmm1) from Schizosaccharomyces pombe (strain 972 / ATCC 24843) (Fission yeast).